We begin with the raw amino-acid sequence, 466 residues long: 3-isopropylmalate dehydratase large subunit (466 aa).

Residues cysteine 347, cysteine 407, and cysteine 410 each contribute to the [4Fe-4S] cluster site.

It belongs to the aconitase/IPM isomerase family. LeuC type 1 subfamily. As to quaternary structure, heterodimer of LeuC and LeuD. It depends on [4Fe-4S] cluster as a cofactor.

The enzyme catalyses (2R,3S)-3-isopropylmalate = (2S)-2-isopropylmalate. The protein operates within amino-acid biosynthesis; L-leucine biosynthesis; L-leucine from 3-methyl-2-oxobutanoate: step 2/4. Its function is as follows. Catalyzes the isomerization between 2-isopropylmalate and 3-isopropylmalate, via the formation of 2-isopropylmaleate. This Vibrio vulnificus (strain CMCP6) protein is 3-isopropylmalate dehydratase large subunit.